Here is a 308-residue protein sequence, read N- to C-terminus: Putative integrase/recombinase y4qK (308 aa).

The region spanning 15 to 97 is the Core-binding (CB) domain; it reads LVMTPLRQRM…ALRFFFSVTL (83 aa). The region spanning 115–288 is the Tyr recombinase domain; it reads KLPIILSPDE…ATNKVCATSS (174 aa). Active-site residues include Arg150, Lys175, His240, Arg243, and His266. Residue Tyr275 is the O-(3'-phospho-DNA)-tyrosine intermediate of the active site.

It belongs to the 'phage' integrase family.

May function as an integrase. The sequence is that of Putative integrase/recombinase y4qK from Sinorhizobium fredii (strain NBRC 101917 / NGR234).